The sequence spans 133 residues: Ribosome-binding factor A (133 aa).

This sequence belongs to the RbfA family. Monomer. Binds 30S ribosomal subunits, but not 50S ribosomal subunits or 70S ribosomes.

The protein localises to the cytoplasm. Its function is as follows. One of several proteins that assist in the late maturation steps of the functional core of the 30S ribosomal subunit. Associates with free 30S ribosomal subunits (but not with 30S subunits that are part of 70S ribosomes or polysomes). Required for efficient processing of 16S rRNA. May interact with the 5'-terminal helix region of 16S rRNA. The chain is Ribosome-binding factor A from Acinetobacter baumannii (strain AB307-0294).